A 201-amino-acid polypeptide reads, in one-letter code: 3-isopropylmalate dehydratase small subunit (201 aa).

This sequence belongs to the LeuD family. LeuD type 1 subfamily. As to quaternary structure, heterodimer of LeuC and LeuD.

It catalyses the reaction (2R,3S)-3-isopropylmalate = (2S)-2-isopropylmalate. Its pathway is amino-acid biosynthesis; L-leucine biosynthesis; L-leucine from 3-methyl-2-oxobutanoate: step 2/4. Functionally, catalyzes the isomerization between 2-isopropylmalate and 3-isopropylmalate, via the formation of 2-isopropylmaleate. This is 3-isopropylmalate dehydratase small subunit from Xanthobacter autotrophicus (strain ATCC BAA-1158 / Py2).